Reading from the N-terminus, the 152-residue chain is D-aminoacyl-tRNA deacylase (152 aa).

Positions 137–138 (GP) match the Gly-cisPro motif, important for rejection of L-amino acids motif.

It belongs to the DTD family. Homodimer.

Its subcellular location is the cytoplasm. The catalysed reaction is glycyl-tRNA(Ala) + H2O = tRNA(Ala) + glycine + H(+). The enzyme catalyses a D-aminoacyl-tRNA + H2O = a tRNA + a D-alpha-amino acid + H(+). Its function is as follows. An aminoacyl-tRNA editing enzyme that deacylates mischarged D-aminoacyl-tRNAs. Also deacylates mischarged glycyl-tRNA(Ala), protecting cells against glycine mischarging by AlaRS. Acts via tRNA-based rather than protein-based catalysis; rejects L-amino acids rather than detecting D-amino acids in the active site. By recycling D-aminoacyl-tRNA to D-amino acids and free tRNA molecules, this enzyme counteracts the toxicity associated with the formation of D-aminoacyl-tRNA entities in vivo and helps enforce protein L-homochirality. The sequence is that of D-aminoacyl-tRNA deacylase from Aromatoleum aromaticum (strain DSM 19018 / LMG 30748 / EbN1) (Azoarcus sp. (strain EbN1)).